Here is a 517-residue protein sequence, read N- to C-terminus: MKAILYVIVAVIALILGGAAGVAGGYYWFERESRKKLNSAEARARHIVDEALREAEAKKKEAILEAKEEVHRLRTEAERELKERRAELQRLERRVLQKEEQLDRKVEQLERKEETLSRKERELDRKNQQAQELVNKQMAELERISQLTMEEARELFLKQVEQEARADAAKLIREIDAEARENAEKRARELVGLAVQRVAADHSSELTVTVVSLPNDEMKGRIIGREGRNIRTLETLTGVDLIIDDTPEAVVLSAFDPVRREVAKIALQKLIQDGRIHPARIEEMVEKAQKEVEARIREEGDAACFELGIHNLHPELVKLLGRLKFRTSYGQNVLKHSIEVAHLAGIMAAELGVNVEVAKRAGLLHDIGKAVDHEIEGSHVAIGVSLLRRYKEHPDVIHAMECHHGDVEPRSVEAHLVAAADAISAARPGARRETLETYIKRLEKLEALADSFDGVDKSYAIQAGREIRVMVKPEKIDDYAALKLTKEIARKIEEELEYPGQIRVVVVRETRAVEYAR.

Residues 3 to 23 (AILYVIVAVIALILGGAAGVA) form a helical membrane-spanning segment. Positions 207–292 (TVTVVSLPND…EMVEKAQKEV (86 aa)) constitute a KH domain. The HD domain occupies 333–426 (VLKHSIEVAH…VAAADAISAA (94 aa)).

The protein belongs to the RNase Y family.

The protein localises to the cell membrane. In terms of biological role, endoribonuclease that initiates mRNA decay. The chain is Ribonuclease Y from Symbiobacterium thermophilum (strain DSM 24528 / JCM 14929 / IAM 14863 / T).